Reading from the N-terminus, the 268-residue chain is Putative hydro-lyase ABSDF2257 (268 aa).

Belongs to the D-glutamate cyclase family.

This chain is Putative hydro-lyase ABSDF2257, found in Acinetobacter baumannii (strain SDF).